Here is a 398-residue protein sequence, read N- to C-terminus: tRNA-specific 2-thiouridylase MnmA (398 aa).

ATP-binding positions include 18–25 (AMSGGVDS) and L44. The Nucleophile role is filled by C112. A disulfide bridge connects residues C112 and C213. Residue G136 coordinates ATP. Residues 163-165 (RDQ) form an interaction with tRNA region. The Cysteine persulfide intermediate role is filled by C213.

This sequence belongs to the MnmA/TRMU family.

Its subcellular location is the cytoplasm. The enzyme catalyses S-sulfanyl-L-cysteinyl-[protein] + uridine(34) in tRNA + AH2 + ATP = 2-thiouridine(34) in tRNA + L-cysteinyl-[protein] + A + AMP + diphosphate + H(+). Its function is as follows. Catalyzes the 2-thiolation of uridine at the wobble position (U34) of tRNA, leading to the formation of s(2)U34. The chain is tRNA-specific 2-thiouridylase MnmA from Sinorhizobium medicae (strain WSM419) (Ensifer medicae).